The sequence spans 238 residues: Ribonuclease PH (238 aa).

Phosphate-binding positions include R86 and 124 to 126 (GTR).

The protein belongs to the RNase PH family. As to quaternary structure, homohexameric ring arranged as a trimer of dimers.

The enzyme catalyses tRNA(n+1) + phosphate = tRNA(n) + a ribonucleoside 5'-diphosphate. Its function is as follows. Phosphorolytic 3'-5' exoribonuclease that plays an important role in tRNA 3'-end maturation. Removes nucleotide residues following the 3'-CCA terminus of tRNAs; can also add nucleotides to the ends of RNA molecules by using nucleoside diphosphates as substrates, but this may not be physiologically important. Probably plays a role in initiation of 16S rRNA degradation (leading to ribosome degradation) during starvation. The protein is Ribonuclease PH of Maricaulis maris (strain MCS10) (Caulobacter maris).